We begin with the raw amino-acid sequence, 2298 residues long: Protein Ycf2 (2298 aa).

1638-1645 contributes to the ATP binding site; sequence GSIGTGRS.

Belongs to the Ycf2 family.

Its subcellular location is the plastid. The protein resides in the chloroplast stroma. Its function is as follows. Probable ATPase of unknown function. Its presence in a non-photosynthetic plant (Epifagus virginiana) and experiments in tobacco indicate that it has an essential function which is probably not related to photosynthesis. The chain is Protein Ycf2 from Gossypium barbadense (Sea Island cotton).